A 151-amino-acid chain; its full sequence is Deoxyuridine 5'-triphosphate nucleotidohydrolase (151 aa).

Residues 70–72 (RSG), asparagine 83, 87–89 (LID), and methionine 97 each bind substrate.

The protein belongs to the dUTPase family. Mg(2+) serves as cofactor.

The enzyme catalyses dUTP + H2O = dUMP + diphosphate + H(+). It functions in the pathway pyrimidine metabolism; dUMP biosynthesis; dUMP from dCTP (dUTP route): step 2/2. Functionally, this enzyme is involved in nucleotide metabolism: it produces dUMP, the immediate precursor of thymidine nucleotides and it decreases the intracellular concentration of dUTP so that uracil cannot be incorporated into DNA. This is Deoxyuridine 5'-triphosphate nucleotidohydrolase from Pseudomonas fluorescens (strain ATCC BAA-477 / NRRL B-23932 / Pf-5).